Here is a 565-residue protein sequence, read N- to C-terminus: Mediator of RNA polymerase II transcription subunit 1 (565 aa).

A disordered region spans residues 141–170 (SGNNLGSGNGTNGSSLTNKTDKKSVSSGNG).

This sequence belongs to the Mediator complex subunit 1 family. As to quaternary structure, component of the Mediator complex.

Its subcellular location is the nucleus. In terms of biological role, component of the Mediator complex, a coactivator involved in the regulated transcription of nearly all RNA polymerase II-dependent genes. Mediator functions as a bridge to convey information from gene-specific regulatory proteins to the basal RNA polymerase II transcription machinery. Mediator is recruited to promoters by direct interactions with regulatory proteins and serves as a scaffold for the assembly of a functional preinitiation complex with RNA polymerase II and the general transcription factors. This is Mediator of RNA polymerase II transcription subunit 1 (MED1) from Candida glabrata (strain ATCC 2001 / BCRC 20586 / JCM 3761 / NBRC 0622 / NRRL Y-65 / CBS 138) (Yeast).